A 382-amino-acid chain; its full sequence is Lipid-A-disaccharide synthase (382 aa).

It belongs to the LpxB family.

It catalyses the reaction a lipid X + a UDP-2-N,3-O-bis[(3R)-3-hydroxyacyl]-alpha-D-glucosamine = a lipid A disaccharide + UDP + H(+). The protein operates within bacterial outer membrane biogenesis; LPS lipid A biosynthesis. Condensation of UDP-2,3-diacylglucosamine and 2,3-diacylglucosamine-1-phosphate to form lipid A disaccharide, a precursor of lipid A, a phosphorylated glycolipid that anchors the lipopolysaccharide to the outer membrane of the cell. The chain is Lipid-A-disaccharide synthase from Dechloromonas aromatica (strain RCB).